The sequence spans 906 residues: Toll-like receptor 12 (906 aa).

The signal sequence occupies residues 1–21 (MGRYWLLPGLLLSLPLVTGWS). Residues 22 to 709 (TSNCLVTEGS…DHCPQTLELK (688 aa)) lie on the Extracellular side of the membrane. A glycan (N-linked (GlcNAc...) asparagine) is linked at Asn-59. LRR repeat units follow at residues 91–114 (FPGL…LRGL), 115–140 (GQLQ…AFSD), 142–170 (ISLQ…QWLG), 198–222 (SWTL…SLQG), 224–247 (QVEI…GLQK), 267–290 (HFEL…ALAS), 291–314 (CHSL…FLTA), 316–338 (PRLQ…MNET), 341–364 (VSGL…AFSC), 366–388 (PHLR…LFQE), 389–412 (LQQL…WLAA), 414–436 (PALT…GFWG), 462–484 (LTSL…PAIF), 485–508 (PSLE…NASG), and 510–533 (FPAL…GTSN). Asn-336 carries an N-linked (GlcNAc...) asparagine glycan. Asn-505 carries an N-linked (GlcNAc...) asparagine glycan. Asn-552 is a glycosylation site (N-linked (GlcNAc...) asparagine). LRR repeat units follow at residues 562-586 (LPSL…QLEE) and 591-614 (LPQL…AFQR). A helical membrane pass occupies residues 710-730 (LFLASSALVFMLIALPLLQEA). Over 731-906 (RNSWIPYLQA…FWTWLRSRLG (176 aa)) the chain is Cytoplasmic. Residues 759-905 (FLFDVFVSHC…GFWTWLRSRL (147 aa)) form the TIR domain.

It belongs to the Toll-like receptor family. As to quaternary structure, binds MYD88 via their respective TIR domains. Macrophages, liver, kidney and bladder epithelial cells.

Its subcellular location is the membrane. Its function is as follows. Participates in the innate immune response to microbial agents. Acts via MYD88 and TRAF6, leading to NF-kappa-B activation, cytokine secretion and the inflammatory response. Plays a role in preventing infection of internal organs of the urogenital system. The chain is Toll-like receptor 12 from Mus musculus (Mouse).